A 145-amino-acid chain; its full sequence is D-aminoacyl-tRNA deacylase (145 aa).

Positions 137–138 (GP) match the Gly-cisPro motif, important for rejection of L-amino acids motif.

Belongs to the DTD family. In terms of assembly, homodimer.

It is found in the cytoplasm. It carries out the reaction glycyl-tRNA(Ala) + H2O = tRNA(Ala) + glycine + H(+). It catalyses the reaction a D-aminoacyl-tRNA + H2O = a tRNA + a D-alpha-amino acid + H(+). Its function is as follows. An aminoacyl-tRNA editing enzyme that deacylates mischarged D-aminoacyl-tRNAs. Also deacylates mischarged glycyl-tRNA(Ala), protecting cells against glycine mischarging by AlaRS. Acts via tRNA-based rather than protein-based catalysis; rejects L-amino acids rather than detecting D-amino acids in the active site. By recycling D-aminoacyl-tRNA to D-amino acids and free tRNA molecules, this enzyme counteracts the toxicity associated with the formation of D-aminoacyl-tRNA entities in vivo and helps enforce protein L-homochirality. The polypeptide is D-aminoacyl-tRNA deacylase (Salmonella typhi).